The sequence spans 332 residues: Large ribosomal subunit protein mL44 (332 aa).

The transit peptide at Met1–Gly30 directs the protein to the mitochondrion. Positions Asp86–Leu228 constitute an RNase III domain. Residues Asn236–Gly306 enclose the DRBM domain.

The protein belongs to the ribonuclease III family. Mitochondrion-specific ribosomal protein mL44 subfamily. In terms of assembly, component of the mitochondrial ribosome large subunit (39S) which comprises a 16S rRNA and about 50 distinct proteins.

The protein resides in the mitochondrion. Functionally, component of the 39S subunit of mitochondrial ribosome. May have a function in the assembly/stability of nascent mitochondrial polypeptides exiting the ribosome. The chain is Large ribosomal subunit protein mL44 (MRPL44) from Bos taurus (Bovine).